The following is a 436-amino-acid chain: MNNNTSIIILAAGLGTRMKSKRPKVLFELCGEPMIIHILKQAYAITNDVSVVLHYEKELISKKIKEIFPQTKIFEQDLANFPGTAGAIKGVNLSGEKVLVTCGDMPLVRSTDLMRLANAEADVVMSSFEAANPFGYGRVIIKNGKVEAIVEQKDASEAQLAIKSVNAGCYCFKREALEQILPLINNQNAQKEYYLTDAIKIANEKGLKCVAVNVNEQNFMGINDKFQLSIAEKIMQDEIKQNLMKAGVLMRMPESIFIDSRAKFEGECVLEENVSILGECVITESIIKSSSVIESSVIKNSDIGPLAHIRPNSEISDTHIGNFVEVKKGVLNGVKAGHLSYLGDCEIESGTNIGCGTITCNYDGKAKYKTKIGKNVFVGSDTQLVAPVNIADNVIIAAGSTITKDVESGALAISRGRQENKSGFFEKFFGKDDVKK.

Residues 1–225 are pyrophosphorylase; that stretch reads MNNNTSIIIL…EQNFMGINDK (225 aa). UDP-N-acetyl-alpha-D-glucosamine is bound by residues 10-13, lysine 24, glutamine 76, and 83-84; these read LAAG and GT. Aspartate 104 lines the Mg(2+) pocket. The UDP-N-acetyl-alpha-D-glucosamine site is built by glycine 137, glutamate 151, asparagine 166, and asparagine 223. A Mg(2+)-binding site is contributed by asparagine 223. The interval 226 to 246 is linker; the sequence is FQLSIAEKIMQDEIKQNLMKA. Residues 247–436 are N-acetyltransferase; the sequence is GVLMRMPESI…KFFGKDDVKK (190 aa). 2 residues coordinate UDP-N-acetyl-alpha-D-glucosamine: arginine 310 and lysine 327. The Proton acceptor role is filled by histidine 338. Positions 341 and 352 each coordinate UDP-N-acetyl-alpha-D-glucosamine. Residues 361–362, serine 380, alanine 398, and arginine 415 each bind acetyl-CoA; that span reads NY.

In the N-terminal section; belongs to the N-acetylglucosamine-1-phosphate uridyltransferase family. It in the C-terminal section; belongs to the transferase hexapeptide repeat family. As to quaternary structure, homotrimer. Mg(2+) is required as a cofactor.

The protein resides in the cytoplasm. The enzyme catalyses alpha-D-glucosamine 1-phosphate + acetyl-CoA = N-acetyl-alpha-D-glucosamine 1-phosphate + CoA + H(+). The catalysed reaction is N-acetyl-alpha-D-glucosamine 1-phosphate + UTP + H(+) = UDP-N-acetyl-alpha-D-glucosamine + diphosphate. Its pathway is nucleotide-sugar biosynthesis; UDP-N-acetyl-alpha-D-glucosamine biosynthesis; N-acetyl-alpha-D-glucosamine 1-phosphate from alpha-D-glucosamine 6-phosphate (route II): step 2/2. It participates in nucleotide-sugar biosynthesis; UDP-N-acetyl-alpha-D-glucosamine biosynthesis; UDP-N-acetyl-alpha-D-glucosamine from N-acetyl-alpha-D-glucosamine 1-phosphate: step 1/1. It functions in the pathway bacterial outer membrane biogenesis; LPS lipid A biosynthesis. In terms of biological role, catalyzes the last two sequential reactions in the de novo biosynthetic pathway for UDP-N-acetylglucosamine (UDP-GlcNAc). The C-terminal domain catalyzes the transfer of acetyl group from acetyl coenzyme A to glucosamine-1-phosphate (GlcN-1-P) to produce N-acetylglucosamine-1-phosphate (GlcNAc-1-P), which is converted into UDP-GlcNAc by the transfer of uridine 5-monophosphate (from uridine 5-triphosphate), a reaction catalyzed by the N-terminal domain. The sequence is that of Bifunctional protein GlmU from Campylobacter concisus (strain 13826).